A 263-amino-acid polypeptide reads, in one-letter code: Retinoic acid early transcript 1E (263 aa).

The N-terminal stretch at 1–30 is a signal peptide; the sequence is MRRISLTSSPVRLLLFLLLLLIALEIMVGG. Residues 31–116 are MHC class I alpha-1 like; down-regulates the cell surface expression of KLRK1; it reads HSLCFNFTIK…DIKPQIKTSD (86 aa). Residues 31–225 lie on the Extracellular side of the membrane; the sequence is HSLCFNFTIK…IHWSSSSLPD (195 aa). Residues N36, N154, and N212 are each glycosylated (N-linked (GlcNAc...) asparagine). Residues 117 to 207 form an MHC class I alpha-2 like; down-regulates the cell surface expression of KLRK1 region; sequence PSTLQVEMFC…GHWEAMPEPT (91 aa). Cysteines 126 and 189 form a disulfide. A helical transmembrane segment spans residues 226–248; sequence RWIILGAFILLVLMGIVLICVWW. The Cytoplasmic segment spans residues 249–263; that stretch reads QNGEWQAGLWPLRTS.

The protein belongs to the MHC class I family. In terms of assembly, binds to KLRK1/NKG2D. As to quaternary structure, (Microbial infection) Contrary to other family members, does not interact with CMV glycoprotein UL16. As to expression, predominantly expressed in the skin, but also expressed in testis and trachea. Up-regulated in tumor cells of different origins. Expression progressively decreased after treatment of tumor cells with retinoic acid.

Its subcellular location is the membrane. The protein resides in the secreted. Binds and activates the KLRK1/NKG2D receptor, mediating natural killer cell cytotoxicity. This Homo sapiens (Human) protein is Retinoic acid early transcript 1E.